A 343-amino-acid polypeptide reads, in one-letter code: UDP-3-O-acylglucosamine N-acyltransferase (343 aa).

The active-site Proton acceptor is His-238.

The protein belongs to the transferase hexapeptide repeat family. LpxD subfamily. In terms of assembly, homotrimer.

It carries out the reaction a UDP-3-O-[(3R)-3-hydroxyacyl]-alpha-D-glucosamine + a (3R)-hydroxyacyl-[ACP] = a UDP-2-N,3-O-bis[(3R)-3-hydroxyacyl]-alpha-D-glucosamine + holo-[ACP] + H(+). It functions in the pathway bacterial outer membrane biogenesis; LPS lipid A biosynthesis. In terms of biological role, catalyzes the N-acylation of UDP-3-O-acylglucosamine using 3-hydroxyacyl-ACP as the acyl donor. Is involved in the biosynthesis of lipid A, a phosphorylated glycolipid that anchors the lipopolysaccharide to the outer membrane of the cell. The polypeptide is UDP-3-O-acylglucosamine N-acyltransferase (Marinomonas sp. (strain MWYL1)).